Here is a 342-residue protein sequence, read N- to C-terminus: Dihydroorotate dehydrogenase (quinone) (342 aa).

Residues 61–65 (AGLDK) and T85 each bind FMN. K65 contributes to the substrate binding site. Residue 110-114 (NRMGF) participates in substrate binding. FMN is bound by residues N138 and N171. Position 171 (N171) interacts with substrate. The Nucleophile role is filled by S174. Residue N176 coordinates substrate. 2 residues coordinate FMN: K216 and T244. Substrate is bound at residue 245 to 246 (NT). FMN contacts are provided by residues G267, G296, and 317-318 (YS).

It belongs to the dihydroorotate dehydrogenase family. Type 2 subfamily. As to quaternary structure, monomer. The cofactor is FMN.

It is found in the cell membrane. It carries out the reaction (S)-dihydroorotate + a quinone = orotate + a quinol. It participates in pyrimidine metabolism; UMP biosynthesis via de novo pathway; orotate from (S)-dihydroorotate (quinone route): step 1/1. Catalyzes the conversion of dihydroorotate to orotate with quinone as electron acceptor. The polypeptide is Dihydroorotate dehydrogenase (quinone) (Pseudomonas aeruginosa (strain LESB58)).